Reading from the N-terminus, the 194-residue chain is uncharacterized protein (194 aa).

Residues 1 to 15 form the signal peptide; the sequence is MFVLSIALLSCTTLC. Residues 49-134 form the PAN domain; that stretch reads CPQGLHADAI…KATYYEKIRC (86 aa). 2 cysteine pairs are disulfide-bonded: Cys49–Cys134 and Cys79–Cys106.

This is an uncharacterized protein from Caenorhabditis elegans.